The primary structure comprises 728 residues: Catalase-peroxidase 1 (728 aa).

The segment at residues Trp91–Tyr218 is a cross-link (tryptophyl-tyrosyl-methioninium (Trp-Tyr) (with M-244)). His92 acts as the Proton acceptor in catalysis. Residues Tyr218–Met244 constitute a cross-link (tryptophyl-tyrosyl-methioninium (Tyr-Met) (with W-91)). His259 provides a ligand contact to heme b.

The protein belongs to the peroxidase family. Peroxidase/catalase subfamily. Homodimer or homotetramer. Heme b serves as cofactor. Formation of the three residue Trp-Tyr-Met cross-link is important for the catalase, but not the peroxidase activity of the enzyme.

The enzyme catalyses H2O2 + AH2 = A + 2 H2O. It catalyses the reaction 2 H2O2 = O2 + 2 H2O. Its function is as follows. Bifunctional enzyme with both catalase and broad-spectrum peroxidase activity. This Burkholderia orbicola (strain MC0-3) protein is Catalase-peroxidase 1.